Consider the following 625-residue polypeptide: Chaperone protein HtpG (625 aa).

Residues 1–339 (MNKQTLSFQA…SSDLPLNVSR (339 aa)) are a; substrate-binding. Residues 340 to 557 (ELLQESRDVK…DGDISGHLAR (218 aa)) are b. The tract at residues 558 to 625 (LLKQAGQSAP…YVQRVNRLLV (68 aa)) is c.

It belongs to the heat shock protein 90 family. Homodimer.

It localises to the cytoplasm. In terms of biological role, molecular chaperone. Has ATPase activity. The polypeptide is Chaperone protein HtpG (Methylibium petroleiphilum (strain ATCC BAA-1232 / LMG 22953 / PM1)).